The following is a 623-amino-acid chain: MSFLLCIGILLLPWFPCVCGKCIFDQIQRSVNVVSPPTAQYASAYRFKTQRSKRHIMPMDNLQPIRIKIWIPSESPALSDWEREKLMSAVGEAVSEVSSLLSVKRVKDRLLLNRDVNKYCKFIWRNSSTLNHMKCGRAHENYRFESCLGVIIPDEHLDGCSVYPNPEHPVPTVLRPRGPGVPDADFLLYVFTHNTEKCRAESSVLAYTAHCQTGSDGRPLAGTMVICRETLKKERYTYQHFVKVTTVIHELFHVLGFSKELLSNWKDFGVDCWSHGQVTSTDQTGQVRLYSPTVIRAMQKHFNSTHTDLGAPLENKDAALDGLSSHWEARVLQGSIMAASLVEASLVRIDAITLAALQDTGWYSVNHSRAQSLVWGEGEGSDFGSVSACHNSSAFFCTGSGLGCHFLHLNKGECVTDQYLDGCHIFKPLANASECWIEDNARSGMNEGGGEIFGSDSRCFISNITRLNNVTAYTPVSGHCYRHRCTGINKYHIQVKDSDWMDCPAGTSIEVSGYQGFIFCPENRLCKYSDLAPPTSTQRTESLFSDTTAQSDLGMMEKDAAVQPSFTSLFLVSEAKISLAAVLSLMAVFALLSAAVLLYRKNLSVRVHAASYRTPLPHILYRN.

The first 20 residues, 1–20 (MSFLLCIGILLLPWFPCVCG), serve as a signal peptide directing secretion. Residues 21-578 (KCIFDQIQRS…LFLVSEAKIS (558 aa)) lie on the Extracellular side of the membrane. H249 contacts Zn(2+). The active site involves E250. Residues H253 and H326 each contribute to the Zn(2+) site. A helical transmembrane segment spans residues 579-599 (LAAVLSLMAVFALLSAAVLLY). Residues 600–623 (RKNLSVRVHAASYRTPLPHILYRN) are Cytoplasmic-facing.

It belongs to the peptidase M8 family. Zn(2+) serves as cofactor. In terms of tissue distribution, expressed specifically in dorsal forerunner cells (DFCs) that form a ciliated Kupffer's vesicle later.

The protein resides in the membrane. Functionally, plays an essential role for patterning the left-right axis. Requires solely on the left side, downstream of the leftward flow, but upstream of dand5, a nodal inhibitor involved in left-right patterning. In Danio rerio (Zebrafish), this protein is Ciliated left-right organizer metallopeptidase (cirop).